The sequence spans 51 residues: uncharacterized protein (51 aa).

This is an uncharacterized protein from Grapevine leafroll-associated virus 3 (isolate United States/NY1) (GLRaV-3).